Consider the following 150-residue polypeptide: FAD synthase (150 aa).

ATP is bound by residues 20–21, 25–28, and Asp-103; these read TF and HPGH.

This sequence belongs to the archaeal FAD synthase family. As to quaternary structure, homodimer. It depends on a divalent metal cation as a cofactor.

It carries out the reaction FMN + ATP + H(+) = FAD + diphosphate. It functions in the pathway cofactor biosynthesis; FAD biosynthesis; FAD from FMN: step 1/1. Its function is as follows. Catalyzes the transfer of the AMP portion of ATP to flavin mononucleotide (FMN) to produce flavin adenine dinucleotide (FAD) coenzyme. The sequence is that of FAD synthase from Methanohalobium evestigatum (strain ATCC BAA-1072 / DSM 3721 / NBRC 107634 / OCM 161 / Z-7303).